A 446-amino-acid chain; its full sequence is Probable polyamine aminopropyl transferase (446 aa).

Residues 1–117 (MVEPAIGRNH…KRIACVVSAV (117 aa)) form a unknown region. Residues 64-94 (GRGAERWHRSPRQANGRFSNQRYSSTSPNSS) form a disordered region. The segment covering 75–94 (RQANGRFSNQRYSSTSPNSS) has biased composition (polar residues). A PABS domain is found at 116 to 351 (AVIFVATSCV…ELFAKKPGSG (236 aa)). Residues 118–353 (IFVATSCVSP…FAKKPGSGSE (236 aa)) are spermidine synthase. S-methyl-5'-thioadenosine is bound by residues N147, E226, and 251 to 252 (DG). Catalysis depends on D269, which acts as the Proton acceptor.

Belongs to the spermidine/spermine synthase family. In terms of assembly, homodimer or homotetramer.

It is found in the cytoplasm. It catalyses the reaction S-adenosyl 3-(methylsulfanyl)propylamine + putrescine = S-methyl-5'-thioadenosine + spermidine + H(+). It participates in amine and polyamine biosynthesis; spermidine biosynthesis; spermidine from putrescine: step 1/1. Functionally, catalyzes the irreversible transfer of a propylamine group from the amino donor S-adenosylmethioninamine (decarboxy-AdoMet) to putrescine (1,4-diaminobutane) to yield spermidine. In Bifidobacterium longum (strain NCC 2705), this protein is Probable polyamine aminopropyl transferase (speE).